Consider the following 475-residue polypeptide: MPQTTPYSSKFNPSAYSSSHSHRQPVEENYGGLHYRDNKLVSGSLEALIQLLVPTVDYYPDRSYIFTFLLSSRLFLNPFELMSRVCYLGVDHHRVGDPQMDKKRIRDIAPKIVQLLTEWTETFPYDFRDERMMRSLKEMTHRLAFGDELSRRAMQRLIQRLLRKLTTLGQYEESLATTSAAAAIDRPVALKSKQQLVRRDDCVLNLCDDPFIFAQQLTHIEMERLSYIGPEEFVRAFAQKRPSDNHKSFFSKRKASNLEAYVEWFNRLSYLTATEICMPVKKKHRARVLEFFIDVAQECFNIGNFNSLMAIITGMNMNPVSRLKKTWGKVNTDKFDILVHQMDPSSNFYSYRTALRGATQRSSTAHTSQEMIVIPFFSLFIKDIYFLNEGCANRLSNGHINFEKFWELAKQVSEFLSWRQVICPFERDRKTLQYLISAPVFSEDELQLASYESEGPENNLERDTRRSLRSSLSRM.

Polar residues predominate over residues 1–19; that stretch reads MPQTTPYSSKFNPSAYSSS. A disordered region spans residues 1–25; the sequence is MPQTTPYSSKFNPSAYSSSHSHRQP. Positions 36–166 constitute an N-terminal Ras-GEF domain; that stretch reads RDNKLVSGSL…LIQRLLRKLT (131 aa). One can recognise a Ras-GEF domain in the interval 209–456; sequence DPFIFAQQLT…QLASYESEGP (248 aa). Positions 452-475 are disordered; it reads ESEGPENNLERDTRRSLRSSLSRM.

Functionally, guanine nucleotide exchange factor (GEF) for Ras family proteins. This is Ras-GEF domain-containing family member 1B-B from Danio rerio (Zebrafish).